A 267-amino-acid chain; its full sequence is Protein TIFY 7 (267 aa).

The region spanning 113-148 (SSGSSPQLTIFYGGTISVFNDISPDKAQAIMLCAGN) is the Tify domain. The short motif at 220–244 (PQARKASLARFLEKRKERLMSAMPY) is the Jas element. A Nuclear localization signal motif is present at residues 222–229 (ARKASLAR).

It belongs to the TIFY/JAZ family. Homo- and heterodimer. Interacts with MYC2, MYC3, MYC4, COI1, AFPH2/NINJA, TIFY10A/JAZ1, TIFY10B/JAZ2, TIFY6B/JAZ3, TIFY5A/JAZ8, TIFY9/JAZ10 and TIFY3A/JAZ11. Interacts with RHD6 and RSL1. In terms of processing, ubiquitinated. Targeted for degradation by the SCF(COI1) E3 ubiquitin ligase-proteasome pathway during jasmonate signaling.

It localises to the nucleus. Functionally, repressor of jasmonate responses. Jasmonoyl-isoleucine (JA-Ile) specifically promotes COI1-TIFY7/JAZ9 interaction. Interacts with and suppresses RHD6 and RSL1 transcription factor activities to negatively regulate jasmonate-stimulated root hair development. The chain is Protein TIFY 7 (TIFY7) from Arabidopsis thaliana (Mouse-ear cress).